Reading from the N-terminus, the 590-residue chain is MKREYHHPHHPTCSTSPTGKGKMWDADPQQDAGMDELLAVLGYNVKASDMAEVAQKLEQLEEVIVNAQEDGLSHLASETVHYNPSDLSNWLGSMLSEFNPTPNCALDNPFLPPISPLDYTNCSTQPKQEPSIFDSPSLDYDLKAIPGKALYSHIEQPPQQPPAPPLYQRDNKRLKPTTSATANSVSSVIGGWGVPTESARPVVLVDSQETGIRLVHTLMACAEAVQQENLKLAEALVKQIGFLAVSQAGAMRKVATYFAEGLARRIYRLYPDKPLDSSFSDILQMHFYETCPYLKFAHFTANQAILEAFEGKKRVHVIDFSMKQGMQWPALMQALALRPGGPPSFRLTGIGPPSTDNTDHLHEVGWKLAQLAETIHVEFEYRGFVANSLADLDASMLELRDGESVAVNSVFELHSLLARPGGIERVLSAVKDMKPDIVTIVEQEANHNGPVFLDRFTESLHYYSTLFDSLEGCGVSPVNTQDKLMSEVYLGQQICNVVACEGPERVERHETLAQWRARLGSAGFDPVNLGSNAFKQASMLLALFAGGDGYRVEENNGCLMLGWHTRPLIATSAWQLANKPALPSSTPASN.

Residues 1–10 (MKREYHHPHH) are compositionally biased toward basic residues. Positions 1 to 28 (MKREYHHPHHPTCSTSPTGKGKMWDADP) are disordered. Positions 35–39 (DELLA) match the DELLA motif motif. The disordered stretch occupies residues 153 to 182 (HIEQPPQQPPAPPLYQRDNKRLKPTTSATA). One can recognise a GRAS domain in the interval 205-575 (VDSQETGIRL…RPLIATSAWQ (371 aa)). The tract at residues 212–266 (IRLVHTLMACAEAVQQENLKLAEALVKQIGFLAVSQAGAMRKVATYFAEGLARRI) is leucine repeat I (LRI). A VHIID region spans residues 284 to 349 (QMHFYETCPY…GGPPSFRLTG (66 aa)). Positions 315–319 (VHVID) match the VHIID motif. Residues 363 to 395 (EVGWKLAQLAETIHVEFEYRGFVANSLADLDAS) are leucine repeat II (LRII). A PFYRE region spans residues 405–496 (VAVNSVFELH…EVYLGQQICN (92 aa)). An LXXLL motif motif is present at residues 413-417 (LHSLL). An SAW region spans residues 499–575 (ACEGPERVER…RPLIATSAWQ (77 aa)).

This sequence belongs to the GRAS family. DELLA subfamily. In terms of processing, phosphorylated. Ubiquitinated. Upon GA application it is ubiquitinated, leading to its subsequent degradation.

The protein resides in the nucleus. Functionally, probable transcriptional regulator that acts as a repressor of the gibberellin (GA) signaling pathway. Probably acts by participating in large multiprotein complexes that repress transcription of GA-inducible genes. Upon GA application, it is degraded by the proteasome, allowing the GA signaling pathway. This chain is DELLA protein GAI1 (GAI1), found in Vitis vinifera (Grape).